A 470-amino-acid chain; its full sequence is Nuclear segregation protein BFR1 (470 aa).

Coiled-coil stretches lie at residues 17-178 and 237-281; these read DKKL…NGLN and NEFK…THAK. S260 is modified (phosphoserine). At T336 the chain carries Phosphothreonine. The interval 346 to 368 is disordered; it reads APSKSKKYKKKNQQKNTENEQPA. Basic residues predominate over residues 349–358; the sequence is KSKKYKKKNQ. The residue at position 369 (S369) is a Phosphoserine. The stretch at 398–469 forms a coiled coil; it reads NSDDVKITVE…EQEESEKDKE (72 aa). Positions 447–470 are disordered; sequence QQVKKELEEKRLKEQEESEKDKEN.

Its function is as follows. Implicated in secretion, nuclear segregation and in maintenance of cell size. This is Nuclear segregation protein BFR1 (BFR1) from Saccharomyces cerevisiae (strain ATCC 204508 / S288c) (Baker's yeast).